The primary structure comprises 190 residues: NADH-quinone oxidoreductase subunit B (190 aa).

Residues cysteine 69, cysteine 70, cysteine 134, and cysteine 164 each coordinate [4Fe-4S] cluster.

Belongs to the complex I 20 kDa subunit family. As to quaternary structure, NDH-1 is composed of 14 different subunits. Subunits NuoB, C, D, E, F, and G constitute the peripheral sector of the complex. [4Fe-4S] cluster is required as a cofactor.

It localises to the cell inner membrane. The catalysed reaction is a quinone + NADH + 5 H(+)(in) = a quinol + NAD(+) + 4 H(+)(out). In terms of biological role, NDH-1 shuttles electrons from NADH, via FMN and iron-sulfur (Fe-S) centers, to quinones in the respiratory chain. Couples the redox reaction to proton translocation (for every two electrons transferred, four hydrogen ions are translocated across the cytoplasmic membrane), and thus conserves the redox energy in a proton gradient. This Chelativorans sp. (strain BNC1) protein is NADH-quinone oxidoreductase subunit B.